Reading from the N-terminus, the 427-residue chain is Large ribosomal subunit protein uL4 (427 aa).

Residue alanine 2 is modified to N-acetylalanine. N6-acetyllysine is present on lysine 14. Arginine 97 is subject to Omega-N-methylarginine. Lysine 106 carries the post-translational modification N6-acetyllysine. Residue lysine 239 forms a Glycyl lysine isopeptide (Lys-Gly) (interchain with G-Cter in SUMO2) linkage. Lysine 259 carries the N6-acetyllysine modification. At threonine 266 the chain carries Phosphothreonine. Phosphoserine occurs at positions 290 and 295. Position 300 is a citrulline (arginine 300). Lysine 327 participates in a covalent cross-link: Glycyl lysine isopeptide (Lys-Gly) (interchain with G-Cter in SUMO2). Residues lysine 333 and lysine 353 each carry the N6-acetyllysine modification. The residue at position 364 (lysine 364) is an N6-acetyllysine; alternate. A Glycyl lysine isopeptide (Lys-Gly) (interchain with G-Cter in SUMO1); alternate cross-link involves residue lysine 364. Position 365 is a phosphoserine (serine 365). The disordered stretch occupies residues 369–427 (AAVAGKKPVVGKKGKKVAVGVKKQKKPLVGKKAAATKKPAPEKKSTEKKPTTEEKKPAA). Basic residues predominate over residues 377-397 (VVGKKGKKVAVGVKKQKKPLV). The segment covering 407 to 427 (PAPEKKSTEKKPTTEEKKPAA) has biased composition (basic and acidic residues).

The protein belongs to the universal ribosomal protein uL4 family. Component of the large ribosomal subunit. May bind IPO9 with low affinity. Interacts with RBM3. In terms of processing, citrullinated by PADI4.

It is found in the cytoplasm. Component of the large ribosomal subunit. The ribosome is a large ribonucleoprotein complex responsible for the synthesis of proteins in the cell. The polypeptide is Large ribosomal subunit protein uL4 (RPL4) (Macaca fascicularis (Crab-eating macaque)).